The primary structure comprises 787 residues: uncharacterized protein (787 aa).

An N-acetylmethionine modification is found at Met1. Disordered regions lie at residues 1 to 115 (MFDG…NDHK), 130 to 200 (TNPF…QRSE), and 217 to 238 (VSSG…ASQD). Polar residues predominate over residues 36-54 (VPSTIKKSTNIARTSTAET). At Ser63 the chain carries Phosphoserine. Over residues 130–142 (TNPFTTSANSNAH) the composition is skewed to polar residues. A compositionally biased stretch (low complexity) spans 160–169 (SITTSISNNT). A compositionally biased stretch (basic and acidic residues) spans 170-184 (TKEEIESNNDSERDS). Over residues 218–230 (SSGSSLSLDTSEN) the composition is skewed to low complexity. Phosphoserine occurs at positions 254, 313, 342, 345, 390, 477, 492, 546, 683, and 699.

It is found in the cytoplasm. This is an uncharacterized protein from Saccharomyces cerevisiae (strain ATCC 204508 / S288c) (Baker's yeast).